The following is a 351-amino-acid chain: Spermidine/putrescine import ATP-binding protein PotA (351 aa).

In terms of domain architecture, ABC transporter spans 6–236; the sequence is LELRNVTKEY…PENAWVANFI (231 aa). 38 to 45 is an ATP binding site; it reads GPSGCGKT.

It belongs to the ABC transporter superfamily. Spermidine/putrescine importer (TC 3.A.1.11.1) family. In terms of assembly, the complex is composed of two ATP-binding proteins (PotA), two transmembrane proteins (PotB and PotC) and a solute-binding protein (PotD).

The protein localises to the cell membrane. The catalysed reaction is ATP + H2O + polyamine-[polyamine-binding protein]Side 1 = ADP + phosphate + polyamineSide 2 + [polyamine-binding protein]Side 1.. Part of the ABC transporter complex PotABCD involved in spermidine/putrescine import. Responsible for energy coupling to the transport system. This chain is Spermidine/putrescine import ATP-binding protein PotA, found in Mycoplasma capricolum subsp. capricolum (strain California kid / ATCC 27343 / NCTC 10154).